Consider the following 430-residue polypeptide: Histidinol dehydrogenase (430 aa).

Residues tyrosine 129, glutamine 190, and asparagine 213 each contribute to the NAD(+) site. Residues serine 236, glutamine 258, and histidine 261 each coordinate substrate. Positions 258 and 261 each coordinate Zn(2+). Residues glutamate 326 and histidine 327 each act as proton acceptor in the active site. The substrate site is built by histidine 327, aspartate 360, glutamate 414, and histidine 419. Aspartate 360 provides a ligand contact to Zn(2+). Histidine 419 provides a ligand contact to Zn(2+).

Belongs to the histidinol dehydrogenase family. The cofactor is Zn(2+).

It carries out the reaction L-histidinol + 2 NAD(+) + H2O = L-histidine + 2 NADH + 3 H(+). It functions in the pathway amino-acid biosynthesis; L-histidine biosynthesis; L-histidine from 5-phospho-alpha-D-ribose 1-diphosphate: step 9/9. Functionally, catalyzes the sequential NAD-dependent oxidations of L-histidinol to L-histidinaldehyde and then to L-histidine. The polypeptide is Histidinol dehydrogenase (Caldanaerobacter subterraneus subsp. tengcongensis (strain DSM 15242 / JCM 11007 / NBRC 100824 / MB4) (Thermoanaerobacter tengcongensis)).